We begin with the raw amino-acid sequence, 314 residues long: Porphobilinogen deaminase (314 aa).

Residue C249 is modified to S-(dipyrrolylmethanemethyl)cysteine.

It belongs to the HMBS family. Monomer. Requires dipyrromethane as cofactor.

The enzyme catalyses 4 porphobilinogen + H2O = hydroxymethylbilane + 4 NH4(+). The protein operates within porphyrin-containing compound metabolism; protoporphyrin-IX biosynthesis; coproporphyrinogen-III from 5-aminolevulinate: step 2/4. Its function is as follows. Tetrapolymerization of the monopyrrole PBG into the hydroxymethylbilane pre-uroporphyrinogen in several discrete steps. This chain is Porphobilinogen deaminase, found in Brucella abortus (strain S19).